We begin with the raw amino-acid sequence, 99 residues long: Protein translation factor SUI1 homolog (99 aa).

The protein belongs to the SUI1 family.

This chain is Protein translation factor SUI1 homolog, found in Sulfolobus acidocaldarius (strain ATCC 33909 / DSM 639 / JCM 8929 / NBRC 15157 / NCIMB 11770).